A 164-amino-acid polypeptide reads, in one-letter code: Large ribosomal subunit protein bL17 (164 aa).

The disordered stretch occupies residues 127–164 (RARTDSVPARKGAGKKDASRVSGTVPDGQSQKIGKKKE).

The protein belongs to the bacterial ribosomal protein bL17 family. As to quaternary structure, part of the 50S ribosomal subunit. Contacts protein L32.

The chain is Large ribosomal subunit protein bL17 from Treponema pallidum (strain Nichols).